Reading from the N-terminus, the 487-residue chain is Ribulose bisphosphate carboxylase large chain (487 aa).

2 residues coordinate substrate: Asn-127 and Thr-177. Lys-179 serves as the catalytic Proton acceptor. Lys-181 contacts substrate. Residues Lys-205, Asp-207, and Glu-208 each contribute to the Mg(2+) site. The residue at position 205 (Lys-205) is an N6-carboxylysine. Residue His-297 is the Proton acceptor of the active site. Arg-298, His-330, and Ser-382 together coordinate substrate.

The protein belongs to the RuBisCO large chain family. Type I subfamily. As to quaternary structure, heterohexadecamer of 8 large chains and 8 small chains. The cofactor is Mg(2+).

The enzyme catalyses 2 (2R)-3-phosphoglycerate + 2 H(+) = D-ribulose 1,5-bisphosphate + CO2 + H2O. It catalyses the reaction D-ribulose 1,5-bisphosphate + O2 = 2-phosphoglycolate + (2R)-3-phosphoglycerate + 2 H(+). Its function is as follows. RuBisCO catalyzes two reactions: the carboxylation of D-ribulose 1,5-bisphosphate, the primary event in carbon dioxide fixation, as well as the oxidative fragmentation of the pentose substrate. Both reactions occur simultaneously and in competition at the same active site. The chain is Ribulose bisphosphate carboxylase large chain from Paracoccus denitrificans (strain Pd 1222).